Here is a 563-residue protein sequence, read N- to C-terminus: BOS complex subunit NCLN (563 aa).

Residues 1 to 42 (MLEEAGEVLENMLKASCLPLGFIVFLPAVLLLVAPPLPAADA) form the signal peptide. Over 43–522 (AHEFTVYRMQ…VMNAYRVKPA (480 aa)) the chain is Lumenal. 2 N-linked (GlcNAc...) asparagine glycosylation sites follow: N241 and N428. The helical transmembrane segment at 523-543 (VFDLLLAVGIAAYLGMAYVAV) threads the bilayer. Residues 544-563 (QHFSLLYKTVQRLLVKAKTQ) are Cytoplasmic-facing.

It belongs to the nicastrin family. As to quaternary structure, component of the back of Sec61 (BOS) complex, composed of NCLN/Nicalin, NOMO (NOMO1, NOMO2 or NOMO3) and TMEM147. The BOS complex is part of the multi-pass translocon (MPT) complex, composed of three subcomplexes, the GEL complex (composed of RAB5IF/OPTI and TMCO1), the BOS complex (composed of NCLN/Nicalin, NOMO and TMEM147) and the PAT complex (composed of WDR83OS/Asterix and CCDC47). The MPT complex associates with the SEC61 complex. In terms of tissue distribution, highly expressed in pancreas and skeletal muscle and, at lower levels, in heart.

Its subcellular location is the endoplasmic reticulum membrane. Its function is as follows. Component of the multi-pass translocon (MPT) complex that mediates insertion of multi-pass membrane proteins into the lipid bilayer of membranes. The MPT complex takes over after the SEC61 complex: following membrane insertion of the first few transmembrane segments of proteins by the SEC61 complex, the MPT complex occludes the lateral gate of the SEC61 complex to promote insertion of subsequent transmembrane regions. May antagonize Nodal signaling and subsequent organization of axial structures during mesodermal patterning, via its interaction with NOMO. The polypeptide is BOS complex subunit NCLN (Homo sapiens (Human)).